The primary structure comprises 654 residues: Acetyl-coenzyme A synthetase (654 aa).

CoA contacts are provided by residues 190 to 193 and T313; that span reads RGGK. ATP-binding positions include 389–391, 413–418, D504, and R519; these read GEP and DTWWQT. S527 lines the CoA pocket. R530 is a binding site for ATP. Residues V541 and V546 each coordinate Mg(2+). K613 is modified (N6-acetyllysine).

The protein belongs to the ATP-dependent AMP-binding enzyme family. Requires Mg(2+) as cofactor. Post-translationally, acetylated. Deacetylation by the SIR2-homolog deacetylase activates the enzyme.

It carries out the reaction acetate + ATP + CoA = acetyl-CoA + AMP + diphosphate. Catalyzes the conversion of acetate into acetyl-CoA (AcCoA), an essential intermediate at the junction of anabolic and catabolic pathways. AcsA undergoes a two-step reaction. In the first half reaction, AcsA combines acetate with ATP to form acetyl-adenylate (AcAMP) intermediate. In the second half reaction, it can then transfer the acetyl group from AcAMP to the sulfhydryl group of CoA, forming the product AcCoA. The sequence is that of Acetyl-coenzyme A synthetase from Leptospira borgpetersenii serovar Hardjo-bovis (strain L550).